The following is a 374-amino-acid chain: CMP-N-acetylneuraminate-beta-1,4-galactoside alpha-2,3-sialyltransferase (374 aa).

Over methionine 1 to arginine 8 the chain is Cytoplasmic. Residues asparagine 9–tryptophan 28 traverse the membrane as a helical; Signal-anchor for type II membrane protein segment. Residues lysine 29–isoleucine 374 lie on the Lumenal side of the membrane. N-linked (GlcNAc...) asparagine glycosylation is found at asparagine 79 and asparagine 170. An intrachain disulfide couples cysteine 159 to cysteine 313.

Belongs to the glycosyltransferase 29 family. As to expression, found in all tissues tested. High expression found in brain, liver, kidney, colon, heart and spleen.

The protein localises to the membrane. The protein resides in the golgi apparatus. It localises to the golgi stack membrane. The enzyme catalyses a beta-D-galactosyl-(1-&gt;4)-N-acetyl-beta-D-glucosaminyl derivative + CMP-N-acetyl-beta-neuraminate = an N-acetyl-alpha-neuraminyl-(2-&gt;3)-beta-D-galactosyl-(1-&gt;4)-N-acetyl-beta-D-glucosaminyl derivative + CMP + H(+). It functions in the pathway protein modification; protein glycosylation. In terms of biological role, catalyzes the formation of the NeuAc-alpha-2,3-Gal-beta-1,4-GlcNAc-, NeuAc-alpha-2,3-Gal-beta-1,3-GlcNAc- and NeuAc-alpha-2,3-Gal-beta-1,3-GalNAc- sequences found in terminal carbohydrate groups of glycoproteins and glycolipids. The highest activity is toward Gal-beta-1,3-GlcNAc and the lowest toward Gal-beta-1,3-GalNAc. This Mus musculus (Mouse) protein is CMP-N-acetylneuraminate-beta-1,4-galactoside alpha-2,3-sialyltransferase (St3gal3).